A 469-amino-acid polypeptide reads, in one-letter code: Alpha-2C adrenergic receptor (469 aa).

Residues 1-29 (MDLQLTTNSTDSGDRGGSSNESLQRQPPS) form a disordered region. At 1–36 (MDLQLTTNSTDSGDRGGSSNESLQRQPPSQYSPAEV) the chain is on the extracellular side. Asparagine 8 and asparagine 20 each carry an N-linked (GlcNAc...) asparagine glycan. The chain crosses the membrane as a helical span at residues 37–62 (AGLAAVVSFLIVFTIVGNVLVVIAVL). Over 63–73 (TSRALKAPQNL) the chain is Cytoplasmic. A helical membrane pass occupies residues 74-99 (FQVSLASADILVATLVMPFSLANELM). Topologically, residues 100-109 (NYWYFGKVWC) are extracellular. Residues cysteine 109 and cysteine 187 are joined by a disulfide bond. A helical membrane pass occupies residues 110–132 (VIYLALDVLFCTSSIVHLCAISL). The Cytoplasmic portion of the chain corresponds to 133-154 (DRYWSVTQAVEYNLKRTPRRIK). The helical transmembrane segment at 155–175 (GIIVTVWLISAVISFPPLISL) threads the bilayer. The Extracellular portion of the chain corresponds to 176–194 (YRDPEDDLYPQCELNDETW). Residues 195–216 (YILSSCIGSFFAPCIIMVLVYV) form a helical membrane-spanning segment. Over 217–386 (RIYRVAKLRT…RKVTQAREKR (170 aa)) the chain is Cytoplasmic. 2 disordered regions span residues 232 to 261 (KRTVPEGSSQTENGLSRPPVGAGPSTAAAA) and 279 to 353 (HHHH…SRLS). Residues 279–296 (HHHHHLHHHHHHHHHQLR) show a composition bias toward basic residues. Positions 301–310 (LEDIELEESS) are enriched in acidic residues. The segment covering 331 to 353 (RGFSFSFSSTKGGQSAGAGSRLS) has biased composition (low complexity). A helical transmembrane segment spans residues 387–407 (FTFVLAVVMGVFVVCWFPFFF). Residues 408–427 (TYSLYGICREACQVPETLFK) are Extracellular-facing. The chain crosses the membrane as a helical span at residues 428–448 (FFFWIGYCNSSLNPVIYTIFN). Over 449–469 (QDFRRSFKHILFKKKKKTSLQ) the chain is Cytoplasmic.

The protein belongs to the G-protein coupled receptor 1 family. Adrenergic receptor subfamily. ADRA2C sub-subfamily.

It is found in the cell membrane. In terms of biological role, alpha-2 adrenergic receptors mediate the catecholamine-induced inhibition of adenylate cyclase through the action of G proteins. This chain is Alpha-2C adrenergic receptor (ADRA2C), found in Didelphis virginiana (North American opossum).